Reading from the N-terminus, the 352-residue chain is MEENIFVIKFINDDRLYQIPLNIINKYPKSYFQSIIHFTNKFECLIETYTYEEFSDVYKYMIEDNFSMQNYLRNFCVLDYFGLNNIIYDELIPTIKFAENRINEFVSKNTYIYSTTIEEYFAYKRIFFDKPYIIPVQIVNVRSDGDRDKYLLFAGNGDLVDFGYVNTALSNDMFLKKSFLKLTDKIPQGLPFDFIRGVSIHEFERYLSNNQIESDYYLKFKSYMCTNEMTDKTYCNEVQYILNGIDINMSLELRGKYYYKNGFFSCKRLNENLLNKYIDTYSDKNTVTYNDDIISLCGKFFSEHKNLLFENMPVVFEDSVCDEYSAEYSTISHTTKISVSLGFINVKNVSDK.

This is an uncharacterized protein from Acanthamoeba polyphaga mimivirus (APMV).